The sequence spans 138 residues: MLDRLDAALRFQQEALNLRAQRQEILAANIANADTPGYQARDIDFASELKKVMVRGREETGGVALTLTSSHHIPAQAVSSPAVDLLYRVPDQPSLDGNTVDMDRERTQFADNSLKYQMGLTVLGSQLKGMMNVLQGGN.

Belongs to the flagella basal body rod proteins family. As to quaternary structure, the basal body constitutes a major portion of the flagellar organelle and consists of a number of rings mounted on a central rod. In Gram-negative bacteria, at least four rings, L, P, S and M are present, whereas Gram-positive bacteria lack the L and P rings. The rod consists of about 26 subunits of FlgG in the distal portion, and FlgB, FlgC and FlgF build up the proximal portion of the rod with about 6 subunits each. Rod assembly occurs by export via the flagellum-specific pathway of its constituent proteins and by their incorporation into the rod structure in the probable order of FlgB, FlgC, FlgF and FlgG. Another protein, FliE, also assembles onto the stable rod structure. Interacts with FliE and peptidoglycan hydrolase FlgJ (via N-terminus), which seems to function as a scaffold or cap for rod assembly.

It localises to the bacterial flagellum basal body. In terms of biological role, structural component of flagellum, the bacterial motility apparatus. Part of the rod structure of flagellar basal body. This Salmonella typhimurium (strain LT2 / SGSC1412 / ATCC 700720) protein is Flagellar basal body rod protein FlgB (flgB).